A 241-amino-acid polypeptide reads, in one-letter code: Small ribosomal subunit protein uS3 (241 aa).

The KH type-2 domain occupies 39-108; the sequence is IREGVLKLLK…NLKVEVKVIE (70 aa). The interval 215–241 is disordered; sequence SQRVSEKAPMNNDRRFNNKNNNRGGRK. Low complexity predominate over residues 232 to 241; it reads NKNNNRGGRK.

The protein belongs to the universal ribosomal protein uS3 family. Part of the 30S ribosomal subunit. Forms a tight complex with proteins S10 and S14.

Binds the lower part of the 30S subunit head. Binds mRNA in the 70S ribosome, positioning it for translation. In Mesoplasma florum (Acholeplasma florum), this protein is Small ribosomal subunit protein uS3.